The chain runs to 629 residues: tRNA uridine 5-carboxymethylaminomethyl modification enzyme MnmG (629 aa).

Gly-13–Gly-18 is an FAD binding site. Gly-273 to Phe-287 is an NAD(+) binding site.

Belongs to the MnmG family. In terms of assembly, homodimer. Heterotetramer of two MnmE and two MnmG subunits. It depends on FAD as a cofactor.

It is found in the cytoplasm. Its function is as follows. NAD-binding protein involved in the addition of a carboxymethylaminomethyl (cmnm) group at the wobble position (U34) of certain tRNAs, forming tRNA-cmnm(5)s(2)U34. The polypeptide is tRNA uridine 5-carboxymethylaminomethyl modification enzyme MnmG (Shewanella amazonensis (strain ATCC BAA-1098 / SB2B)).